The chain runs to 268 residues: Undecaprenyl-diphosphatase 1 (268 aa).

7 helical membrane passes run 5-25 (TIVEALLLGLLEGLTEFIPVS), 43-63 (GKAFEILIQLGAILAILSVYF), 81-101 (HFVIGILIAFLPAAIIGALAH), 107-127 (VLFESPRLICTMLIIGGVILL), 185-205 (AEFSFFLAIPTMVGAFAFDLF), 214-234 (ADLPIIAIGFVAAFVTALFVV), and 248-268 (LFGWWRLVVGIVGLVALMIWG).

The protein belongs to the UppP family.

The protein localises to the cell inner membrane. It carries out the reaction di-trans,octa-cis-undecaprenyl diphosphate + H2O = di-trans,octa-cis-undecaprenyl phosphate + phosphate + H(+). Functionally, catalyzes the dephosphorylation of undecaprenyl diphosphate (UPP). Confers resistance to bacitracin. The polypeptide is Undecaprenyl-diphosphatase 1 (Mesorhizobium japonicum (strain LMG 29417 / CECT 9101 / MAFF 303099) (Mesorhizobium loti (strain MAFF 303099))).